A 214-amino-acid polypeptide reads, in one-letter code: Metalloproteinase inhibitor 3 (214 aa).

An N-terminal signal peptide occupies residues 1–26 (MSVCALTLILGCFLLFLGDISKPAEG). Cys-27 lines the Zn(2+) pocket. Involved in metalloproteinase-binding regions lie at residues 27 to 30 (CTCA) and 91 to 92 (ES). 6 cysteine pairs are disulfide-bonded: Cys-27–Cys-94, Cys-29–Cys-121, Cys-39–Cys-146, Cys-148–Cys-195, Cys-153–Cys-158, and Cys-166–Cys-187. An NTR domain is found at 27–146 (CTCAPSHPQD…GLNHRYPLGC (120 aa)).

It belongs to the protease inhibitor I35 (TIMP) family.

The protein localises to the secreted. Its subcellular location is the extracellular space. It is found in the extracellular matrix. In terms of biological role, complexes with metalloproteinases (such as collagenases) and irreversibly inactivates them by binding to their catalytic zinc cofactor. May form part of a tissue-specific acute response to remodeling stimuli. In Xenopus laevis (African clawed frog), this protein is Metalloproteinase inhibitor 3 (timp3).